Consider the following 631-residue polypeptide: 1-deoxy-D-xylulose-5-phosphate synthase (631 aa).

Thiamine diphosphate is bound by residues His-87 and 128 to 130; that span reads GHS. Residue Asp-159 coordinates Mg(2+). Residues 160–161, Asn-188, Phe-295, and Glu-377 contribute to the thiamine diphosphate site; that span reads GA. Asn-188 serves as a coordination point for Mg(2+).

Belongs to the transketolase family. DXPS subfamily. In terms of assembly, homodimer. Mg(2+) is required as a cofactor. Requires thiamine diphosphate as cofactor.

It carries out the reaction D-glyceraldehyde 3-phosphate + pyruvate + H(+) = 1-deoxy-D-xylulose 5-phosphate + CO2. Its pathway is metabolic intermediate biosynthesis; 1-deoxy-D-xylulose 5-phosphate biosynthesis; 1-deoxy-D-xylulose 5-phosphate from D-glyceraldehyde 3-phosphate and pyruvate: step 1/1. Its function is as follows. Catalyzes the acyloin condensation reaction between C atoms 2 and 3 of pyruvate and glyceraldehyde 3-phosphate to yield 1-deoxy-D-xylulose-5-phosphate (DXP). This Pseudomonas putida (strain W619) protein is 1-deoxy-D-xylulose-5-phosphate synthase.